We begin with the raw amino-acid sequence, 265 residues long: Chlorophyll a-b binding protein 1A, chloroplastic (265 aa).

Residues 1-34 (MAAAAMALSSPSFAGQAVKLSPSASENSGNGRIT) constitute a chloroplast transit peptide. The chain crosses the membrane as a helical span at residues 151 to 171 (LVHAQSILAIWACQVVLMGAV). Chlorophyll b contacts are provided by Val152, Ser156, Gln164, Glu172, Arg175, and Leu181. 7 residues coordinate chlorophyll a: Lys212, Glu213, Asn216, Arg218, Gln230, His245, and Ala254. A helical membrane pass occupies residues 219–239 (LAMFSMFGFFVQAIVTGKGPL). Phe261 contacts chlorophyll b.

The protein belongs to the light-harvesting chlorophyll a/b-binding (LHC) protein family. As to quaternary structure, the LHC complex consists of chlorophyll a-b binding proteins. It depends on Binds at least 14 chlorophylls (8 Chl-a and 6 Chl-b) and carotenoids such as lutein and neoxanthin. as a cofactor. Photoregulated by reversible phosphorylation of its threonine residues.

It is found in the plastid. The protein localises to the chloroplast thylakoid membrane. In terms of biological role, the light-harvesting complex (LHC) functions as a light receptor, it captures and delivers excitation energy to photosystems with which it is closely associated. The chain is Chlorophyll a-b binding protein 1A, chloroplastic (CAB1A) from Solanum lycopersicum (Tomato).